Here is a 148-residue protein sequence, read N- to C-terminus: Gag-Pol polyprotein (148 aa).

One can recognise an Integrase catalytic domain in the interval 1-64 (IPYNPQSQGV…SAGERIIDII (64 aa)). Glu-12 serves as a coordination point for Mg(2+). Residues 83–130 (FRVYYRDSRDPIWKGPAKLLWKGEGAVVIQDNSDIKVVPRRKVKIIRD) constitute a DNA-binding region (integrase-type).

Homotetramer; may further associate as a homohexadecamer. Part of the pre-integration complex (PIC) which is composed of viral genome, matrix protein, Vpr and integrase. Interacts with human SMARCB1/INI1 and human PSIP1/LEDGF isoform 1. Interacts with human KPNA3; this interaction might play a role in nuclear import of the pre-integration complex. Interacts with human NUP153; this interaction might play a role in nuclear import of the pre-integration complex. Post-translationally, specific enzymatic cleavages by the viral protease yield mature proteins.

Its function is as follows. Catalyzes viral DNA integration into the host chromosome, by performing a series of DNA cutting and joining reactions. This enzyme activity takes place after virion entry into a cell and reverse transcription of the RNA genome in dsDNA. The first step in the integration process is 3' processing. This step requires a complex comprising the viral genome, matrix protein, Vpr and integrase. This complex is called the pre-integration complex (PIC). The integrase protein removes 2 nucleotides from each 3' end of the viral DNA, leaving recessed CA OH's at the 3' ends. In the second step, the PIC enters cell nucleus. This process is mediated through integrase and Vpr proteins, and allows the virus to infect a non dividing cell. This ability to enter the nucleus is specific of lentiviruses, other retroviruses cannot and rely on cell division to access cell chromosomes. In the third step, termed strand transfer, the integrase protein joins the previously processed 3' ends to the 5' ends of strands of target cellular DNA at the site of integration. The 5'-ends are produced by integrase-catalyzed staggered cuts, 5 bp apart. A Y-shaped, gapped, recombination intermediate results, with the 5'-ends of the viral DNA strands and the 3' ends of target DNA strands remaining unjoined, flanking a gap of 5 bp. The last step is viral DNA integration into host chromosome. This involves host DNA repair synthesis in which the 5 bp gaps between the unjoined strands are filled in and then ligated. Since this process occurs at both cuts flanking the HIV genome, a 5 bp duplication of host DNA is produced at the ends of HIV-1 integration. Alternatively, Integrase may catalyze the excision of viral DNA just after strand transfer, this is termed disintegration. This chain is Gag-Pol polyprotein (gag-pol), found in Homo sapiens (Human).